We begin with the raw amino-acid sequence, 245 residues long: 1-(5-phosphoribosyl)-5-[(5-phosphoribosylamino)methylideneamino] imidazole-4-carboxamide isomerase (245 aa).

The active-site Proton acceptor is Asp-8. Asp-130 (proton donor) is an active-site residue.

The protein belongs to the HisA/HisF family.

It localises to the cytoplasm. The catalysed reaction is 1-(5-phospho-beta-D-ribosyl)-5-[(5-phospho-beta-D-ribosylamino)methylideneamino]imidazole-4-carboxamide = 5-[(5-phospho-1-deoxy-D-ribulos-1-ylimino)methylamino]-1-(5-phospho-beta-D-ribosyl)imidazole-4-carboxamide. Its pathway is amino-acid biosynthesis; L-histidine biosynthesis; L-histidine from 5-phospho-alpha-D-ribose 1-diphosphate: step 4/9. The chain is 1-(5-phosphoribosyl)-5-[(5-phosphoribosylamino)methylideneamino] imidazole-4-carboxamide isomerase from Pseudomonas putida (strain ATCC 700007 / DSM 6899 / JCM 31910 / BCRC 17059 / LMG 24140 / F1).